The sequence spans 246 residues: MSEQIYGIHAVNAFLANAPERLIEVFVLKGREDKRLNPLLDELQRLSISVQQVNRQTLDNKAQGEVHQGIIARIIPQKELNEYDLNELLQHKSNPLLLILDGVTDPHNLGACLRTADAAGVDAVIVPKDKSATLTAIARKVACGAAEAMPLIRVTNLARTMRELQDKHQIWIVGTAGEATTDIYTSQLTGAIALVMGAEGDGMRRLTREHCDQLVSIPMAGSVSSLNVSVATGVCLFEIVRQKLSR.

Gly-197, Ile-217, and Leu-226 together coordinate S-adenosyl-L-methionine.

Belongs to the class IV-like SAM-binding methyltransferase superfamily. RNA methyltransferase TrmH family. RlmB subfamily.

It is found in the cytoplasm. The catalysed reaction is guanosine(2251) in 23S rRNA + S-adenosyl-L-methionine = 2'-O-methylguanosine(2251) in 23S rRNA + S-adenosyl-L-homocysteine + H(+). Functionally, specifically methylates the ribose of guanosine 2251 in 23S rRNA. The polypeptide is 23S rRNA (guanosine-2'-O-)-methyltransferase RlmB (Haemophilus ducreyi (strain 35000HP / ATCC 700724)).